The primary structure comprises 442 residues: MLKDRFIADIIASKESLVGGRVRVCGWAYRIRDLGRLKFILVRDRSGVIQATVKRGESPEDALRAAEDLKLESVVCVEGELRQAPTREGVEVKVERLEVLSTPVEPLPLEVEGSEKASLPTRLKYRWLDIRNPMVSAIFELEAMVAKVFRDYYWSQGFVEIFTPKIVAAGTESGAEVFPVVYFDKTAFLAQSPQFYKQFAVIAGLERVFEIGPVFRAEPHHTSRHLNEYHSLDIEVGFIESYNDVMNYVEGFMRAIVRMLEEDGRRVLELYGVELPRIPASGIPKIPLRKAYEILEEKYGKKVEYGEDLDSEGERLMGAYAGEELDSDFVFIVEYPWKVRPFYTMRKDDEPSWTYSFDLLYRGLEIVTGGQREHRYHRLLENLRDKGLDAESFQFYLDFFKHGAPPHGGAGMGLERIVMQTLKLENIREARMLPRDTERITP.

E172 contributes to the L-aspartate binding site. The tract at residues 194–197 (QFYK) is aspartate. R216 is an L-aspartate binding site. Residues 216 to 218 (RAE), 224 to 226 (RHL), and E365 contribute to the ATP site. 2 residues coordinate Mg(2+): E365 and T368. T368 and R372 together coordinate L-aspartate. An ATP-binding site is contributed by 413–416 (GLER).

It belongs to the class-II aminoacyl-tRNA synthetase family. Type 2 subfamily. Homodimer. Mg(2+) serves as cofactor.

Its subcellular location is the cytoplasm. It catalyses the reaction tRNA(Asx) + L-aspartate + ATP = L-aspartyl-tRNA(Asx) + AMP + diphosphate. Aspartyl-tRNA synthetase with relaxed tRNA specificity since it is able to aspartylate not only its cognate tRNA(Asp) but also tRNA(Asn). Reaction proceeds in two steps: L-aspartate is first activated by ATP to form Asp-AMP and then transferred to the acceptor end of tRNA(Asp/Asn). This chain is Aspartate--tRNA(Asp/Asn) ligase (aspS), found in Aeropyrum pernix (strain ATCC 700893 / DSM 11879 / JCM 9820 / NBRC 100138 / K1).